A 130-amino-acid chain; its full sequence is Small ribosomal subunit protein uS8 (130 aa).

This sequence belongs to the universal ribosomal protein uS8 family. As to quaternary structure, part of the 30S ribosomal subunit. Contacts proteins S5 and S12.

Functionally, one of the primary rRNA binding proteins, it binds directly to 16S rRNA central domain where it helps coordinate assembly of the platform of the 30S subunit. The polypeptide is Small ribosomal subunit protein uS8 (Pseudoalteromonas atlantica (strain T6c / ATCC BAA-1087)).